Reading from the N-terminus, the 189-residue chain is GTPase NRas (189 aa).

10 to 17 (GAGGVGKS) contacts GTP. An Effector region motif is present at residues 32–40 (YDPTIEDSY). Residues 57-61 (DTAGQ) and 116-119 (NKCD) contribute to the GTP site. Residues 166–185 (YRMKKLDSSEDNNQGCIRIP) are hypervariable region. Cys181 carries the S-palmitoyl cysteine lipid modification. Cys186 carries the S-farnesyl cysteine lipid modification. The propeptide at 187–189 (KLM) is removed in mature form.

This sequence belongs to the small GTPase superfamily. Ras family. Palmitoylated by the ZDHHC9-GOLGA7 complex. Depalmitoylated by abhd17a, abhd17b and abhd17c. A continuous cycle of de- and re-palmitoylation regulates rapid exchange between plasma membrane and Golgi.

The protein resides in the cell membrane. It localises to the golgi apparatus membrane. The enzyme catalyses GTP + H2O = GDP + phosphate + H(+). With respect to regulation, alternates between an inactive form bound to GDP and an active form bound to GTP. Activated by a guanine nucleotide-exchange factor (GEF) and inactivated by a GTPase-activating protein (GAP). Functionally, ras proteins bind GDP/GTP and possess intrinsic GTPase activity. This is GTPase NRas (nras) from Xenopus laevis (African clawed frog).